The following is a 336-amino-acid chain: Sodium/bile acid cotransporter 7 (336 aa).

At 1–10 (MGLIARVRKE) the chain is on the cytoplasmic side. A helical membrane pass occupies residues 11–31 (WFIIGIVLVITFAKLQPSVGV). Topologically, residues 32–37 (KGGPLH) are extracellular. A helical membrane pass occupies residues 38 to 58 (PEITITYVAVSVIFFNSGLSL). Topologically, residues 59-71 (KTEELASALMHVK) are cytoplasmic. Residues 72 to 92 (LHFFVQTFTLVFFPIAIWLLL) traverse the membrane as a helical segment. Over 93-116 (KVLALTAINEWLLRGLQTVACMPP) the chain is Extracellular. A helical membrane pass occupies residues 117–137 (PVSSAVILTKAVGGNEAAAIF). A topological domain (cytoplasmic) is located at residue N138. The helical transmembrane segment at 139-159 (SAFGSFLGIVVTPLLLLVFLG) threads the bilayer. The Extracellular portion of the chain corresponds to 160-163 (SSSS). The chain crosses the membrane as a helical span at residues 164-184 (VPFTSIFSQLFMTVVVPLIVG). Over 185–201 (QVCRRFLRECLDRRKPP) the chain is Cytoplasmic. A helical transmembrane segment spans residues 202-222 (FGAVSSVVLLMIIYSTFCDTF). Over 223–233 (NNPNIELDHLS) the chain is Extracellular. The chain crosses the membrane as a helical span at residues 234-254 (LLTVVFIIFSIQLSFMALIFF). The Cytoplasmic portion of the chain corresponds to 255 to 270 (LSTRKSSGFSAADSVA). Residues 271–291 (IMFCATHKSLTLGIPMLKIVF) form a helical membrane-spanning segment. The Extracellular portion of the chain corresponds to 292-298 (EGYEHLS). The helical transmembrane segment at 299–319 (LISVPLLIYHPAQILLGSVLL) threads the bilayer. Topologically, residues 320–336 (PSIKTWMSGRQKTLTPI) are cytoplasmic.

The protein belongs to the bile acid:sodium symporter (BASS) (TC 2.A.28) family.

Its subcellular location is the cell membrane. It is found in the endoplasmic reticulum membrane. The protein localises to the golgi apparatus membrane. Involved in teeth and skeletal development. Has an essential role in the biosynthesis and trafficking of glycosaminoglycans and glycoproteins to produce a proper functioning extracellular matrix. Required for extracellular matrix mineralization. Also involved in the regulation of cellular calcium homeostasis. Does not show transport activity towards bile acids or steroid sulfates. The polypeptide is Sodium/bile acid cotransporter 7 (slc10a7) (Danio rerio (Zebrafish)).